The primary structure comprises 669 residues: DNA polymerase epsilon subunit B (669 aa).

The interval 96–115 (QISTRNGSADNLAKKAERSD) is disordered.

It belongs to the DNA polymerase epsilon subunit B family. As to quaternary structure, heterotetramer. Consists of four subunits: POL2, DPB2, DPB3 and DPB4.

It localises to the nucleus. As accessory component of the DNA polymerase epsilon (DNA polymerase II) participates in chromosomal DNA replication. This is DNA polymerase epsilon subunit B (DPB2) from Debaryomyces hansenii (strain ATCC 36239 / CBS 767 / BCRC 21394 / JCM 1990 / NBRC 0083 / IGC 2968) (Yeast).